The primary structure comprises 172 residues: RNA silencing suppressor p19 (172 aa).

The span at 1–20 shows a compositional bias: basic and acidic residues; that stretch reads MERAIQGNDAREQANSERWD. The interval 1–38 is disordered; sequence MERAIQGNDAREQANSERWDGGSGGTTSPFKLPDESPS.

Belongs to the tombusviruses protein p19 family. In terms of assembly, homodimer.

Acts as a suppressor of RNA-mediated gene silencing, also known as post-transcriptional gene silencing (PTGS), a mechanism of plant viral defense that limits the accumulation of viral RNAs. Binds to short interfering RNAs (siRNAs) with high affinity. Acts as a molecular caliper to specifically select siRNAs based on the length of the duplex region of the RNA. The polypeptide is RNA silencing suppressor p19 (Capsicum annuum (Capsicum pepper)).